The sequence spans 866 residues: Rifampicin phosphotransferase (866 aa).

The ATP-binding stretch occupies residues 1-313 (MSSLVLGLHE…FYIVQSRPIT (313 aa)). 8 residues coordinate ATP: lysine 22, arginine 116, glycine 131, threonine 135, glutamine 182, glutamate 296, glutamine 308, and arginine 310. Residues 326–754 (NHVYISVGHQ…TSDGEIVTGE (429 aa)) are rifampicin-binding. The segment at 410–429 (IPNDKTAPNPSRGNADMPAQ) is disordered. A swivel phosphohistidine region spans residues 767–865 (GLPVSSGVIE…VHGTEGYIEI (99 aa)). Histidine 825 acts as the Tele-phosphohistidine intermediate in catalysis.

This sequence belongs to the rifampicin phosphotransferase family.

The enzyme catalyses rifampicin + ATP + H2O = 21-phosphorifampicin + AMP + phosphate + 2 H(+). Functionally, catalyzes the phosphorylation of rifampicin, also known as rifampin (RIF), leading to its inactivation. The chain is Rifampicin phosphotransferase from Bacillus subtilis (strain 168).